A 497-amino-acid polypeptide reads, in one-letter code: Glutamyl-tRNA(Gln) amidotransferase subunit A (497 aa).

Active-site charge relay system residues include Lys91 and Ser166. Positions 143 to 171 (SSTENSAYGPTHNPWDLERTAGGSGGGSS) are disordered. Ser190 acts as the Acyl-ester intermediate in catalysis.

Belongs to the amidase family. GatA subfamily. As to quaternary structure, heterotrimer of A, B and C subunits.

It catalyses the reaction L-glutamyl-tRNA(Gln) + L-glutamine + ATP + H2O = L-glutaminyl-tRNA(Gln) + L-glutamate + ADP + phosphate + H(+). In terms of biological role, allows the formation of correctly charged Gln-tRNA(Gln) through the transamidation of misacylated Glu-tRNA(Gln) in organisms which lack glutaminyl-tRNA synthetase. The reaction takes place in the presence of glutamine and ATP through an activated gamma-phospho-Glu-tRNA(Gln). This Corynebacterium glutamicum (strain ATCC 13032 / DSM 20300 / JCM 1318 / BCRC 11384 / CCUG 27702 / LMG 3730 / NBRC 12168 / NCIMB 10025 / NRRL B-2784 / 534) protein is Glutamyl-tRNA(Gln) amidotransferase subunit A.